The primary structure comprises 1295 residues: Phosphoribosylformylglycinamidine synthase (1295 aa).

Positions 305 to 327 are disordered; sequence WPGAATGSGGEIRDEGATGRGAK. ATP is bound by residues 307–318 and A678; that span reads GAATGSGGEIRD. Mg(2+) contacts are provided by E718, N722, and D884. An ATP-binding site is contributed by S886. The region spanning 1042-1295 is the Glutamine amidotransferase type-1 domain; it reads VAVLREQGVN…IFRNARKQLG (254 aa). C1135 (nucleophile) is an active-site residue. Residues H1260 and E1262 contribute to the active site.

The protein in the N-terminal section; belongs to the FGAMS family. As to quaternary structure, monomer.

The protein localises to the cytoplasm. It catalyses the reaction N(2)-formyl-N(1)-(5-phospho-beta-D-ribosyl)glycinamide + L-glutamine + ATP + H2O = 2-formamido-N(1)-(5-O-phospho-beta-D-ribosyl)acetamidine + L-glutamate + ADP + phosphate + H(+). Its pathway is purine metabolism; IMP biosynthesis via de novo pathway; 5-amino-1-(5-phospho-D-ribosyl)imidazole from N(2)-formyl-N(1)-(5-phospho-D-ribosyl)glycinamide: step 1/2. Its function is as follows. Phosphoribosylformylglycinamidine synthase involved in the purines biosynthetic pathway. Catalyzes the ATP-dependent conversion of formylglycinamide ribonucleotide (FGAR) and glutamine to yield formylglycinamidine ribonucleotide (FGAM) and glutamate. The chain is Phosphoribosylformylglycinamidine synthase from Shigella boydii serotype 4 (strain Sb227).